The chain runs to 487 residues: 2-aminomuconic semialdehyde dehydrogenase (487 aa).

231-236 (GSQPTA) lines the NAD(+) pocket. Glu-253 functions as the Proton acceptor in the catalytic mechanism. Residue Cys-287 is the Nucleophile of the active site. Position 362 is a phosphoserine (Ser-362).

This sequence belongs to the aldehyde dehydrogenase family. In terms of tissue distribution, detected in hepatocytes and in proximal and distal convoluted tubules in kidney cortex (at protein level). Highly expressed in adult liver and in kidney cortex. First detected in embryonic liver after 15 days of development.

It is found in the cytoplasm. The catalysed reaction is 2-aminomuconate 6-semialdehyde + NAD(+) + H2O = (2Z,4E)-2-aminomuconate + NADH + 2 H(+). It participates in amino-acid degradation; L-kynurenine degradation. Its function is as follows. Catalyzes the NAD-dependent oxidation of 2-aminomuconic semialdehyde of the kynurenine metabolic pathway in L-tryptophan degradation. In Mus musculus (Mouse), this protein is 2-aminomuconic semialdehyde dehydrogenase (Aldh8a1).